A 396-amino-acid chain; its full sequence is Inositol hexakisphosphate kinase 3 (396 aa).

206–214 (PCILDLKMG) contributes to the substrate binding site.

Belongs to the inositol phosphokinase (IPK) family. As to expression, highly expressed in cerebellum, brain cortex, kidney, thymus and lung. Detected at lower levels in hippocampus, testis, heart and olfactory bulb.

It localises to the cytoplasm. It catalyses the reaction 1D-myo-inositol hexakisphosphate + ATP = 5-diphospho-1D-myo-inositol 1,2,3,4,6-pentakisphosphate + ADP. It carries out the reaction 1-diphospho-1D-myo-inositol 2,3,4,5,6-pentakisphosphate + ATP + H(+) = 1,5-bis(diphospho)-1D-myo-inositol 2,3,4,6-tetrakisphosphate + ADP. Converts inositol hexakisphosphate (InsP6) to diphosphoinositol pentakisphosphate (InsP7/PP-InsP5). Converts 1,3,4,5,6-pentakisphosphate (InsP5) to PP-InsP4. The sequence is that of Inositol hexakisphosphate kinase 3 (Ip6k3) from Mus musculus (Mouse).